We begin with the raw amino-acid sequence, 231 residues long: Large ribosomal subunit protein uL1 (231 aa).

This sequence belongs to the universal ribosomal protein uL1 family. In terms of assembly, part of the 50S ribosomal subunit.

Functionally, binds directly to 23S rRNA. The L1 stalk is quite mobile in the ribosome, and is involved in E site tRNA release. In terms of biological role, protein L1 is also a translational repressor protein, it controls the translation of the L11 operon by binding to its mRNA. This is Large ribosomal subunit protein uL1 from Staphylococcus carnosus (strain TM300).